The following is a 654-amino-acid chain: DNA ligase (654 aa).

NAD(+) is bound by residues 31-35, 80-81, and E109; these read DSEYD and SL. K111 functions as the N6-AMP-lysine intermediate in the catalytic mechanism. NAD(+) contacts are provided by R132, E166, K280, and K304. Positions 398, 401, 416, and 421 each coordinate Zn(2+). The BRCT domain occupies 579 to 654; sequence NIEGILSGKT…IWSEQDLLDL (76 aa).

This sequence belongs to the NAD-dependent DNA ligase family. LigA subfamily. Requires Mg(2+) as cofactor. The cofactor is Mn(2+).

It carries out the reaction NAD(+) + (deoxyribonucleotide)n-3'-hydroxyl + 5'-phospho-(deoxyribonucleotide)m = (deoxyribonucleotide)n+m + AMP + beta-nicotinamide D-nucleotide.. DNA ligase that catalyzes the formation of phosphodiester linkages between 5'-phosphoryl and 3'-hydroxyl groups in double-stranded DNA using NAD as a coenzyme and as the energy source for the reaction. It is essential for DNA replication and repair of damaged DNA. The protein is DNA ligase of Lactococcus lactis subsp. lactis (strain IL1403) (Streptococcus lactis).